Here is a 318-residue protein sequence, read N- to C-terminus: Probable carboxylesterase 1 (318 aa).

Residue methionine 1 is modified to N-acetylmethionine. The Involved in the stabilization of the negatively charged intermediate by the formation of the oxyanion hole signature appears at 79 to 81 (HGG). Residues serine 163, aspartate 258, and histidine 290 contribute to the active site.

Belongs to the 'GDXG' lipolytic enzyme family. In terms of tissue distribution, expressed in roots, stems, flowers and siliques.

It catalyses the reaction a carboxylic ester + H2O = an alcohol + a carboxylate + H(+). In terms of biological role, carboxylesterase acting on esters with varying acyl chain length. This is Probable carboxylesterase 1 (CXE1) from Arabidopsis thaliana (Mouse-ear cress).